We begin with the raw amino-acid sequence, 330 residues long: Diacylglycerol acyltransferase/mycolyltransferase Ag85B (330 aa).

The first 40 residues, Met-1–Ala-40, serve as a signal peptide directing secretion. Residue Leu-82 to Arg-83 participates in substrate binding. A fibronectin-binding region spans residues Phe-98–Val-108. Cys-127 and Cys-132 are oxidised to a cystine. Ser-166 and Asp-194 together coordinate substrate. Ser-166 acts as the Nucleophile in catalysis. Residue Glu-270 is part of the active site. Residues Phe-272 to Ser-275, Lys-279, and His-302 to Trp-304 each bind substrate. Residue His-302 is part of the active site.

Belongs to the mycobacterial A85 antigen family.

It localises to the secreted. The enzyme catalyses 2 alpha,alpha'-trehalose 6-mycolate = alpha,alpha'-trehalose 6,6'-bismycolate + alpha,alpha-trehalose. It carries out the reaction an acyl-CoA + a 1,2-diacyl-sn-glycerol = a triacyl-sn-glycerol + CoA. In terms of biological role, the antigen 85 proteins (FbpA, FbpB, FbpC) are responsible for the high affinity of mycobacteria for fibronectin, a large adhesive glycoprotein, which facilitates the attachment of M.tuberculosis to murine alveolar macrophages (AMs). They also help to maintain the integrity of the cell wall by catalyzing the transfer of mycolic acids to cell wall arabinogalactan and through the synthesis of alpha,alpha-trehalose dimycolate (TDM, cord factor). They catalyze the transfer of a mycoloyl residue from one molecule of alpha,alpha-trehalose monomycolate (TMM) to another TMM, leading to the formation of TDM. The chain is Diacylglycerol acyltransferase/mycolyltransferase Ag85B (fbpB) from Mycobacterium avium.